The chain runs to 236 residues: Phosphoribosylaminoimidazole-succinocarboxamide synthase (236 aa).

Belongs to the SAICAR synthetase family.

The enzyme catalyses 5-amino-1-(5-phospho-D-ribosyl)imidazole-4-carboxylate + L-aspartate + ATP = (2S)-2-[5-amino-1-(5-phospho-beta-D-ribosyl)imidazole-4-carboxamido]succinate + ADP + phosphate + 2 H(+). It participates in purine metabolism; IMP biosynthesis via de novo pathway; 5-amino-1-(5-phospho-D-ribosyl)imidazole-4-carboxamide from 5-amino-1-(5-phospho-D-ribosyl)imidazole-4-carboxylate: step 1/2. This chain is Phosphoribosylaminoimidazole-succinocarboxamide synthase, found in Lysinibacillus sphaericus (strain C3-41).